A 477-amino-acid chain; its full sequence is Proton-coupled amino acid transporter 3 (477 aa).

At 1-54 the chain is on the cytoplasmic side; the sequence is MGNVPLLREVGKCQRNMFGRSTASSKGSSNSRSSSSTSPKKGPRREADALMFIQ. A compositionally biased stretch (low complexity) spans 19–40; that stretch reads GRSTASSKGSSNSRSSSSTSPK. The disordered stretch occupies residues 19–43; sequence GRSTASSKGSSNSRSSSSTSPKKGP. A helical membrane pass occupies residues 55 to 75; sequence IFIHLLKSNIGTGFLGLPLAV. The Extracellular portion of the chain corresponds to 76-77; sequence KN. The chain crosses the membrane as a helical span at residues 78–98; it reads AGLLVGPVSLLAIGALTVHCM. Topologically, residues 99–144 are cytoplasmic; the sequence is DILLNCACHLTQRLQRSFVNYEETTMYSLETCPSPWLRTHSVWGRY. The chain crosses the membrane as a helical span at residues 145-165; it reads VVSFLLIVTQLGFCSVYFMFL. At 166 to 202 the chain is on the extracellular side; it reads ADNLQQIMEEAHFTSNVCQPRQSLVMTSILDTRFYML. Residues 203 to 223 traverse the membrane as a helical segment; the sequence is TILPFLILLVLIQNPQVLSIF. Residues 224–225 are Cytoplasmic-facing; the sequence is ST. The helical transmembrane segment at 226-246 threads the bilayer; sequence LATITTLSSLALIFEYLIQTP. The Extracellular portion of the chain corresponds to 247–259; sequence HHSNLPLVANWKT. The helical transmembrane segment at 260–280 threads the bilayer; sequence FLLFFGTAIFTFEGVGMVLPL. Residues 281-291 are Cytoplasmic-facing; the sequence is KSQMKSPQQFP. The chain crosses the membrane as a helical span at residues 292-312; sequence AVLYLGMSFVIFLYICLGTLG. The Extracellular segment spans residues 313-344; sequence YMKFGTDTQASITLNLPICWLYQSVKLMYSVG. The helical transmembrane segment at 345-365 threads the bilayer; sequence IFFTYALQFHVPAEIIVPYVV. Topologically, residues 366-374 are cytoplasmic; sequence SRVSENWAL. A helical membrane pass occupies residues 375-395; the sequence is FVDLTVRTALVCLTCFSAVLI. Residues 396–399 are Extracellular-facing; sequence PRLD. The chain crosses the membrane as a helical span at residues 400–420; the sequence is LVISLVGSVSSSALAIIIPPL. Residues 421-432 lie on the Cytoplasmic side of the membrane; the sequence is LEIATFYSENIS. The chain crosses the membrane as a helical span at residues 433–453; that stretch reads CATIVKDIMISILGLLGCVLG. Residues 454 to 477 are Extracellular-facing; that stretch reads TYQALYEMTQQTHFYMANSTRVHI.

It belongs to the amino acid/polyamine transporter 2 family. In terms of tissue distribution, specifically expressed in testis.

It is found in the membrane. The polypeptide is Proton-coupled amino acid transporter 3 (Slc36a3) (Mus musculus (Mouse)).